The following is a 319-amino-acid chain: Guanidinobutyrase (319 aa).

Mn(2+)-binding residues include His129, Asp152, His154, Asp156, Asp243, and Asp245.

It belongs to the arginase family. Agmatinase subfamily. As to quaternary structure, homohexamer. Requires Mn(2+) as cofactor.

It catalyses the reaction 4-guanidinobutanoate + H2O = urea + 4-aminobutanoate. In terms of biological role, catalyzes specifically the hydrolysis of 4-guanidinobutanoate to 4-aminobutanoate and urea. Has no activity against arginine, agmatine, 3-guanidinopropionate and guanidinoacetate. The protein is Guanidinobutyrase (gbuA) of Pseudomonas aeruginosa (strain ATCC 15692 / DSM 22644 / CIP 104116 / JCM 14847 / LMG 12228 / 1C / PRS 101 / PAO1).